We begin with the raw amino-acid sequence, 642 residues long: Chaperone protein DnaK (642 aa).

T200 is modified (phosphothreonine; by autocatalysis). Low complexity predominate over residues 600–616 (EAAQQSAGAAGPMPGAP). The segment at 600 to 642 (EAAQQSAGAAGPMPGAPAEEEPSDGPRKAKGRVVDAEIVDDDK) is disordered. A compositionally biased stretch (basic and acidic residues) spans 623 to 634 (DGPRKAKGRVVD).

Belongs to the heat shock protein 70 family.

Functionally, acts as a chaperone. This is Chaperone protein DnaK from Akkermansia muciniphila (strain ATCC BAA-835 / DSM 22959 / JCM 33894 / BCRC 81048 / CCUG 64013 / CIP 107961 / Muc).